Consider the following 491-residue polypeptide: Probable glycine dehydrogenase (decarboxylating) subunit 2 (491 aa).

K273 bears the N6-(pyridoxal phosphate)lysine mark.

Belongs to the GcvP family. C-terminal subunit subfamily. In terms of assembly, the glycine cleavage system is composed of four proteins: P, T, L and H. In this organism, the P 'protein' is a heterodimer of two subunits. Pyridoxal 5'-phosphate serves as cofactor.

The enzyme catalyses N(6)-[(R)-lipoyl]-L-lysyl-[glycine-cleavage complex H protein] + glycine + H(+) = N(6)-[(R)-S(8)-aminomethyldihydrolipoyl]-L-lysyl-[glycine-cleavage complex H protein] + CO2. In terms of biological role, the glycine cleavage system catalyzes the degradation of glycine. The P protein binds the alpha-amino group of glycine through its pyridoxal phosphate cofactor; CO(2) is released and the remaining methylamine moiety is then transferred to the lipoamide cofactor of the H protein. The polypeptide is Probable glycine dehydrogenase (decarboxylating) subunit 2 (Bacillus thuringiensis (strain Al Hakam)).